The following is a 206-amino-acid chain: Large ribosomal subunit protein eL13 (206 aa).

Residues glutamate 184–lysine 193 show a composition bias toward basic and acidic residues. The interval glutamate 184–alanine 206 is disordered.

Belongs to the eukaryotic ribosomal protein eL13 family.

The protein is Large ribosomal subunit protein eL13 (RPL13) of Tetrahymena thermophila (strain SB210).